Reading from the N-terminus, the 59-residue chain is Large ribosomal subunit protein uL30 (59 aa).

It belongs to the universal ribosomal protein uL30 family. Part of the 50S ribosomal subunit.

In Clostridium botulinum (strain ATCC 19397 / Type A), this protein is Large ribosomal subunit protein uL30.